The chain runs to 706 residues: Choline transporter-like protein 2 (706 aa).

At 1 to 33 the chain is on the cytoplasmic side; it reads MGDERPHYYGKHGTPQKYDPTFKGPIYNRGCTD. Position 14 is a phosphothreonine (Thr-14). The chain crosses the membrane as a helical span at residues 34-54; it reads IICCVFLLLAIVGYVAVGIIA. Residues 55–232 are Extracellular-facing; sequence WTHGDPRKVI…RIFEDYTVSW (178 aa). N-linked (GlcNAc...) asparagine glycosylation is found at Asn-187 and Asn-200. A helical transmembrane segment spans residues 233-253; it reads YWIIIGLVIAMAMSLLFIILL. Topologically, residues 254-256 are cytoplasmic; sequence RFL. A helical transmembrane segment spans residues 257 to 277; the sequence is AGIMVWVMIIMVILVLGYGIF. Topologically, residues 278–315 are extracellular; that stretch reads HCYMEYSRLRGEAGSDVSLVDLGFQTDFRVYLHLRQTW. Residues 316–336 traverse the membrane as a helical segment; that stretch reads LAFMIILSILEVIIILLLIFL. Over 337–364 the chain is Cytoplasmic; sequence RKRILIAIALIKEASRAVGYVMCSLLYP. A helical transmembrane segment spans residues 365-385; the sequence is LVTFFLLCLCIAYWASTAVFL. The Extracellular portion of the chain corresponds to 386–457; that stretch reads STSNEAVYKI…FNAFMFFWLA (72 aa). The N-linked (GlcNAc...) asparagine glycan is linked to Asn-417. A helical membrane pass occupies residues 458 to 480; the sequence is NFVLALGQVTLAGAFASYYWALR. The Cytoplasmic portion of the chain corresponds to 481-504; sequence KPDDLPAFPLFSAFGRALRYHTGS. The chain crosses the membrane as a helical span at residues 505 to 525; sequence LAFGALILAIVQIIRVILEYL. Residues 526–563 are Extracellular-facing; sequence DQRLKAAENKFAKCLMTCLKCCFWCLEKFIKFLNRNAY. The helical transmembrane segment at 564-584 threads the bilayer; it reads IMIAIYGTNFCTSARNAFFLL. Residues 585–599 are Cytoplasmic-facing; that stretch reads MRNIIRVAVLDKVTD. Residues 600-620 form a helical membrane-spanning segment; that stretch reads FLFLLGKLLIVGSVGILAFFF. The Extracellular segment spans residues 621-638; that stretch reads FTHRIRIVQDTAPPLNYY. Residues 639 to 659 traverse the membrane as a helical segment; that stretch reads WVPILTVIVGSYLIAHGFFSV. Residues 660–706 are Cytoplasmic-facing; it reads YGMCVDTLFLCFLEDLERNDGSAERPYFMSSTLKKLLNKTNKKAAES.

The protein belongs to the CTL (choline transporter-like) family. As to quaternary structure, interacts with COCH. As to expression, present in supporting cells of the inner ear (at protein level). Expressed in inner ear vestibular tissue.

It is found in the cell membrane. It localises to the mitochondrion outer membrane. It catalyses the reaction choline(out) + n H(+)(in) = choline(in) + n H(+)(out). It carries out the reaction ethanolamine(out) + n H(+)(in) = ethanolamine(in) + n H(+)(out). In terms of biological role, choline/H+ antiporter, mainly in mitochodria. Also acts as a low-affinity ethanolamine/H+ antiporter, regulating the supply of extracellular ethanolamine (Etn) for the CDP-Etn pathway, redistribute intracellular Etn and balance the CDP-Cho and CDP-Etn arms of the Kennedy pathway. Does not exhibit choline transporter activity. The sequence is that of Choline transporter-like protein 2 from Homo sapiens (Human).